The following is a 514-amino-acid chain: ATP synthase subunit alpha (514 aa).

An ATP-binding site is contributed by 170–177; that stretch reads GDRQIGKS.

The protein belongs to the ATPase alpha/beta chains family. In terms of assembly, F-type ATPases have 2 components, CF(1) - the catalytic core - and CF(0) - the membrane proton channel. CF(1) has five subunits: alpha(3), beta(3), gamma(1), delta(1), epsilon(1). CF(0) has three main subunits: a(1), b(2) and c(9-12). The alpha and beta chains form an alternating ring which encloses part of the gamma chain. CF(1) is attached to CF(0) by a central stalk formed by the gamma and epsilon chains, while a peripheral stalk is formed by the delta and b chains.

The protein resides in the cell inner membrane. It catalyses the reaction ATP + H2O + 4 H(+)(in) = ADP + phosphate + 5 H(+)(out). Its function is as follows. Produces ATP from ADP in the presence of a proton gradient across the membrane. The alpha chain is a regulatory subunit. This chain is ATP synthase subunit alpha, found in Chromohalobacter salexigens (strain ATCC BAA-138 / DSM 3043 / CIP 106854 / NCIMB 13768 / 1H11).